The primary structure comprises 426 residues: Neuromedin-U receptor 1 (426 aa).

Residues 1 to 65 (MTPLCLNCSV…QTELFMPICA (65 aa)) are Extracellular-facing. Asn-7, Asn-27, and Asn-41 each carry an N-linked (GlcNAc...) asparagine glycan. A helical membrane pass occupies residues 66–86 (TYLLIFVVGAVGNGLTCLVIL). Over 87–97 (RHKAMRTPTNY) the chain is Cytoplasmic. The helical transmembrane segment at 98 to 118 (YLFSLAVSDLLVLLVGLPLEL) threads the bilayer. The Extracellular segment spans residues 119–138 (YEMWHNYPFLLGVGGCYFRT). Cys-134 and Cys-219 are joined by a disulfide. A helical membrane pass occupies residues 139-161 (LLFEMVCLASVLNVTALSVERYV). Over 162 to 181 (AVVHPLQARSMVTRAHVRRV) the chain is Cytoplasmic. A helical transmembrane segment spans residues 182–202 (LGAVWGLAMLCSLPNTSLHGI). At 203–235 (RQLHVPCRGPVPDSAVCMLVRPRALYNMVVQTT) the chain is on the extracellular side. Residues 236–256 (ALLFFCLPMAIMSVLYLLIGL) traverse the membrane as a helical segment. At 257-294 (RLRRERLLLMQEAKGRGSAAARSRYTCRLQQHDRGRRQ) the chain is on the cytoplasmic side. Residues 295-315 (VTKMLFVLVVVFGICWAPFHA) form a helical membrane-spanning segment. Topologically, residues 316–338 (DRVMWSVVSQWTDGLHLAFQHVH) are extracellular. Residues 339 to 359 (VISGIFFYLGSAANPVLYSLM) traverse the membrane as a helical segment. The Cytoplasmic segment spans residues 360–426 (SSRFRETFQE…PEAQQETDPS (67 aa)).

Belongs to the G-protein coupled receptor 1 family. In terms of tissue distribution, expressed in greatest abundance in peripheral organs, particularly in elements of the gastrointestinal and urogenital systems with highest levels in testes. In central nervous system structures express levels are much lower than those seen in peripheral organs. Within the CNS, has been detected in highest abundance in the cerebellum, dorsal root ganglia, hippocampus, and spinal cord.

The protein localises to the cell membrane. Receptor for the neuromedin-U and neuromedin-S neuropeptides. The protein is Neuromedin-U receptor 1 (NMUR1) of Homo sapiens (Human).